A 227-amino-acid chain; its full sequence is Cytochrome c oxidase subunit 2 (227 aa).

Over 1–14 the chain is Mitochondrial intermembrane; it reads MAHAAQVGLQDATS. A helical transmembrane segment spans residues 15–45; it reads PIMEELVIFHDHALMIIFLICFLVLYALFLT. Residues 46 to 59 are Mitochondrial matrix-facing; sequence LTTKLTNTSISDAQ. The chain crosses the membrane as a helical span at residues 60–87; the sequence is EMETIWTILPAIILILIALPSLRILYLT. Over 88–227 the chain is Mitochondrial intermembrane; the sequence is DEINDPSFTI…IFEMGPVFTL (140 aa). The Cu cation site is built by histidine 161, cysteine 196, glutamate 198, cysteine 200, histidine 204, and methionine 207. Glutamate 198 contributes to the Mg(2+) binding site.

The protein belongs to the cytochrome c oxidase subunit 2 family. Component of the cytochrome c oxidase (complex IV, CIV), a multisubunit enzyme composed of 14 subunits. The complex is composed of a catalytic core of 3 subunits MT-CO1, MT-CO2 and MT-CO3, encoded in the mitochondrial DNA, and 11 supernumerary subunits COX4I, COX5A, COX5B, COX6A, COX6B, COX6C, COX7A, COX7B, COX7C, COX8 and NDUFA4, which are encoded in the nuclear genome. The complex exists as a monomer or a dimer and forms supercomplexes (SCs) in the inner mitochondrial membrane with NADH-ubiquinone oxidoreductase (complex I, CI) and ubiquinol-cytochrome c oxidoreductase (cytochrome b-c1 complex, complex III, CIII), resulting in different assemblies (supercomplex SCI(1)III(2)IV(1) and megacomplex MCI(2)III(2)IV(2)). Found in a complex with TMEM177, COA6, COX18, COX20, SCO1 and SCO2. Interacts with TMEM177 in a COX20-dependent manner. Interacts with COX20. Interacts with COX16. It depends on Cu cation as a cofactor.

The protein localises to the mitochondrion inner membrane. It catalyses the reaction 4 Fe(II)-[cytochrome c] + O2 + 8 H(+)(in) = 4 Fe(III)-[cytochrome c] + 2 H2O + 4 H(+)(out). Component of the cytochrome c oxidase, the last enzyme in the mitochondrial electron transport chain which drives oxidative phosphorylation. The respiratory chain contains 3 multisubunit complexes succinate dehydrogenase (complex II, CII), ubiquinol-cytochrome c oxidoreductase (cytochrome b-c1 complex, complex III, CIII) and cytochrome c oxidase (complex IV, CIV), that cooperate to transfer electrons derived from NADH and succinate to molecular oxygen, creating an electrochemical gradient over the inner membrane that drives transmembrane transport and the ATP synthase. Cytochrome c oxidase is the component of the respiratory chain that catalyzes the reduction of oxygen to water. Electrons originating from reduced cytochrome c in the intermembrane space (IMS) are transferred via the dinuclear copper A center (CU(A)) of subunit 2 and heme A of subunit 1 to the active site in subunit 1, a binuclear center (BNC) formed by heme A3 and copper B (CU(B)). The BNC reduces molecular oxygen to 2 water molecules using 4 electrons from cytochrome c in the IMS and 4 protons from the mitochondrial matrix. This is Cytochrome c oxidase subunit 2 (MT-CO2) from Pongo abelii (Sumatran orangutan).